A 300-amino-acid polypeptide reads, in one-letter code: Soluble inorganic pyrophosphatase 6, chloroplastic (300 aa).

The transit peptide at 1 to 66 (MAATRVLTAA…CSAIYNPQVK (66 aa)) directs the protein to the chloroplast. Residue R140 coordinates diphosphate. Y142 functions as the Proton donor in the catalytic mechanism. Mg(2+)-binding residues include D173, D178, and D210.

This sequence belongs to the PPase family. Requires Mg(2+) as cofactor. In terms of tissue distribution, expressed in all tissues tested. Highest expression in flowers, leaves and roots. Lower levels of expression in siliques, stems, ovary, stigma and pollen.

It localises to the plastid. The protein localises to the chloroplast stroma. It catalyses the reaction diphosphate + H2O = 2 phosphate + H(+). With respect to regulation, inhibited by NaF. This Arabidopsis thaliana (Mouse-ear cress) protein is Soluble inorganic pyrophosphatase 6, chloroplastic.